Reading from the N-terminus, the 329-residue chain is BTB/POZ domain-containing adapter for CUL3-mediated RhoA degradation protein 1 (329 aa).

The span at 1–22 (MSAEASGPAAAAAPSLEAPKPS) shows a compositional bias: low complexity. Positions 1-31 (MSAEASGPAAAAAPSLEAPKPSGLEPGPAAY) are disordered. A BTB domain is found at 41 to 109 (KYVKLNVGGS…LRDGSVPLPE (69 aa)). Residues 282-303 (ATGGAAGAGGAGRGEDEENREH) form a disordered region.

Belongs to the BACURD family. In terms of assembly, homotetramer; forms a two-fold symmetric tetramer in solution. Interacts with CUL3; interaction is direct and forms a 5:5 heterodecamer. Component of the BCR(KCTD13) E3 ubiquitin ligase complex, at least composed of CUL3, KCTD13/BACURD1 and RBX1. Interacts with RHOA; with a preference for RhoA-GDP. Interacts with POLD2 and PCNA. Interacts with SPRTN. As to expression, expressed in a wide variety of tissues.

It localises to the nucleus. It functions in the pathway protein modification; protein ubiquitination. Functionally, substrate-specific adapter of a BCR (BTB-CUL3-RBX1) E3 ubiquitin-protein ligase complex required for synaptic transmission. The BCR(KCTD13) E3 ubiquitin ligase complex mediates the ubiquitination of RHOA, leading to its degradation by the proteasome Degradation of RHOA regulates the actin cytoskeleton and promotes synaptic transmission. The protein is BTB/POZ domain-containing adapter for CUL3-mediated RhoA degradation protein 1 (KCTD13) of Homo sapiens (Human).